The following is a 393-amino-acid chain: Translation initiation factor eIF2B subunit beta (393 aa).

The segment at 105–125 is disordered; sequence VSSSNSSSPSQKRDIPSNEKL. Residues Ser106, Ser108, and Ser112 each carry the phosphoserine modification.

Belongs to the eIF-2B alpha/beta/delta subunits family. As to quaternary structure, component of the translation initiation factor 2B (eIF2B) complex which is a heterodecamer of two sets of five different subunits: alpha, beta, gamma, delta and epsilon. Subunits alpha, beta and delta comprise a regulatory subcomplex and subunits epsilon and gamma comprise a catalytic subcomplex. Within the complex, the hexameric regulatory complex resides at the center, with the two heterodimeric catalytic subcomplexes bound on opposite sides.

It localises to the cytoplasm. The protein resides in the cytosol. Its function is as follows. Acts as a component of the translation initiation factor 2B (eIF2B) complex, which catalyzes the exchange of GDP for GTP on the eukaryotic initiation factor 2 (eIF2) complex gamma subunit. Its guanine nucleotide exchange factor activity is repressed when bound to eIF2 complex phosphorylated on the alpha subunit, thereby limiting the amount of methionyl-initiator methionine tRNA available to the ribosome and consequently global translation is repressed. In Schizosaccharomyces pombe (strain 972 / ATCC 24843) (Fission yeast), this protein is Translation initiation factor eIF2B subunit beta (tif222).